A 557-amino-acid chain; its full sequence is CTP synthase (557 aa).

The tract at residues 1-267 is amidoligase domain; it reads MAKYIFVTGG…GAYLTQRLGL (267 aa). Residue Ser13 participates in CTP binding. Ser13 is a UTP binding site. Position 14 to 19 (14 to 19) interacts with ATP; that stretch reads SVGKGI. Tyr54 provides a ligand contact to L-glutamine. Residue Asp71 coordinates ATP. Mg(2+) is bound by residues Asp71 and Glu141. CTP is bound by residues 148 to 150, 188 to 193, and Lys224; these read DIE and KTKPTQ. UTP is bound by residues 188–193 and Lys224; that span reads KTKPTQ. The Glutamine amidotransferase type-1 domain occupies 292–535; the sequence is AIALVGKYVE…VAAAAKTFRE (244 aa). Gly354 is an L-glutamine binding site. The Nucleophile; for glutamine hydrolysis role is filled by Cys381. L-glutamine contacts are provided by residues 382 to 385, Glu406, and Arg463; that span reads LGMQ. Catalysis depends on residues His508 and Glu510. The segment at 536-557 is disordered; sequence GDQRPLPLEQNGAVTEHEPHSR.

The protein belongs to the CTP synthase family. Homotetramer.

It carries out the reaction UTP + L-glutamine + ATP + H2O = CTP + L-glutamate + ADP + phosphate + 2 H(+). It catalyses the reaction L-glutamine + H2O = L-glutamate + NH4(+). The catalysed reaction is UTP + NH4(+) + ATP = CTP + ADP + phosphate + 2 H(+). It functions in the pathway pyrimidine metabolism; CTP biosynthesis via de novo pathway; CTP from UDP: step 2/2. Allosterically activated by GTP, when glutamine is the substrate; GTP has no effect on the reaction when ammonia is the substrate. The allosteric effector GTP functions by stabilizing the protein conformation that binds the tetrahedral intermediate(s) formed during glutamine hydrolysis. Inhibited by the product CTP, via allosteric rather than competitive inhibition. In terms of biological role, catalyzes the ATP-dependent amination of UTP to CTP with either L-glutamine or ammonia as the source of nitrogen. Regulates intracellular CTP levels through interactions with the four ribonucleotide triphosphates. The sequence is that of CTP synthase from Roseiflexus sp. (strain RS-1).